Reading from the N-terminus, the 156-residue chain is Small ribosomal subunit protein uS7 (156 aa).

Belongs to the universal ribosomal protein uS7 family. Part of the 30S ribosomal subunit. Contacts proteins S9 and S11.

Functionally, one of the primary rRNA binding proteins, it binds directly to 16S rRNA where it nucleates assembly of the head domain of the 30S subunit. Is located at the subunit interface close to the decoding center, probably blocks exit of the E-site tRNA. The polypeptide is Small ribosomal subunit protein uS7 (Clostridioides difficile (strain 630) (Peptoclostridium difficile)).